Here is a 442-residue protein sequence, read N- to C-terminus: ATP-dependent protease ATPase subunit HslU (442 aa).

ATP is bound by residues I18 and 60 to 65; that span reads GVGKTE. Residues 133–156 are disordered; sequence DALLPKPKNDWDNTDSDTSSNTRQ. D255, E320, and R392 together coordinate ATP.

Belongs to the ClpX chaperone family. HslU subfamily. In terms of assembly, a double ring-shaped homohexamer of HslV is capped on each side by a ring-shaped HslU homohexamer. The assembly of the HslU/HslV complex is dependent on binding of ATP.

It is found in the cytoplasm. Functionally, ATPase subunit of a proteasome-like degradation complex; this subunit has chaperone activity. The binding of ATP and its subsequent hydrolysis by HslU are essential for unfolding of protein substrates subsequently hydrolyzed by HslV. HslU recognizes the N-terminal part of its protein substrates and unfolds these before they are guided to HslV for hydrolysis. This chain is ATP-dependent protease ATPase subunit HslU, found in Shewanella sp. (strain ANA-3).